The following is a 35-amino-acid chain: Cecropin-A (35 aa).

A Leucine amide modification is found at L35.

As to quaternary structure, monomer. In terms of tissue distribution, hemolymph.

The protein resides in the secreted. Its function is as follows. Cecropins have lytic and antibacterial activity against several Gram-positive and Gram-negative bacteria. Also has activity against fungi. This is Cecropin-A from Heliothis virescens (Tobacco budworm moth).